We begin with the raw amino-acid sequence, 154 residues long: 6,7-dimethyl-8-ribityllumazine synthase (154 aa).

5-amino-6-(D-ribitylamino)uracil contacts are provided by residues Phe-22, 56 to 58 (AFE), and 80 to 82 (TVI). A (2S)-2-hydroxy-3-oxobutyl phosphate-binding site is contributed by 85-86 (AT). The Proton donor role is filled by His-88. Phe-113 is a 5-amino-6-(D-ribitylamino)uracil binding site. Arg-127 is a (2S)-2-hydroxy-3-oxobutyl phosphate binding site.

This sequence belongs to the DMRL synthase family. In terms of assembly, forms an icosahedral capsid composed of 60 subunits, arranged as a dodecamer of pentamers.

The catalysed reaction is (2S)-2-hydroxy-3-oxobutyl phosphate + 5-amino-6-(D-ribitylamino)uracil = 6,7-dimethyl-8-(1-D-ribityl)lumazine + phosphate + 2 H2O + H(+). It participates in cofactor biosynthesis; riboflavin biosynthesis; riboflavin from 2-hydroxy-3-oxobutyl phosphate and 5-amino-6-(D-ribitylamino)uracil: step 1/2. In terms of biological role, catalyzes the formation of 6,7-dimethyl-8-ribityllumazine by condensation of 5-amino-6-(D-ribitylamino)uracil with 3,4-dihydroxy-2-butanone 4-phosphate. This is the penultimate step in the biosynthesis of riboflavin. The protein is 6,7-dimethyl-8-ribityllumazine synthase of Bacillus pumilus (strain SAFR-032).